A 545-amino-acid polypeptide reads, in one-letter code: CTP synthase (545 aa).

Residues 1–266 (MATNYIFVTG…DDIVTKRFNL (266 aa)) are amidoligase domain. Residue Ser14 coordinates CTP. Ser14 is a binding site for UTP. ATP is bound by residues 15–20 (SLGKGI) and Asp72. 2 residues coordinate Mg(2+): Asp72 and Glu140. Residues 147–149 (DIE), 187–192 (KTKPTQ), and Lys223 each bind CTP. UTP is bound by residues 187-192 (KTKPTQ) and Lys223. 239 to 241 (RDV) is an ATP binding site. Residues 291-542 (TVGFVGKYVE…IEAAGEFHKE (252 aa)) form the Glutamine amidotransferase type-1 domain. Gly352 contacts L-glutamine. Cys379 acts as the Nucleophile; for glutamine hydrolysis in catalysis. L-glutamine-binding positions include 380 to 383 (LGMQ), Glu403, and Arg470. Residues His515 and Glu517 contribute to the active site.

It belongs to the CTP synthase family. As to quaternary structure, homotetramer.

It catalyses the reaction UTP + L-glutamine + ATP + H2O = CTP + L-glutamate + ADP + phosphate + 2 H(+). The enzyme catalyses L-glutamine + H2O = L-glutamate + NH4(+). The catalysed reaction is UTP + NH4(+) + ATP = CTP + ADP + phosphate + 2 H(+). It functions in the pathway pyrimidine metabolism; CTP biosynthesis via de novo pathway; CTP from UDP: step 2/2. Its activity is regulated as follows. Allosterically activated by GTP, when glutamine is the substrate; GTP has no effect on the reaction when ammonia is the substrate. The allosteric effector GTP functions by stabilizing the protein conformation that binds the tetrahedral intermediate(s) formed during glutamine hydrolysis. Inhibited by the product CTP, via allosteric rather than competitive inhibition. Catalyzes the ATP-dependent amination of UTP to CTP with either L-glutamine or ammonia as the source of nitrogen. Regulates intracellular CTP levels through interactions with the four ribonucleotide triphosphates. The sequence is that of CTP synthase from Idiomarina loihiensis (strain ATCC BAA-735 / DSM 15497 / L2-TR).